The following is a 235-amino-acid chain: tRNA (cytidine-2'-O-)-methyltransferase TrmJ (235 aa).

S-adenosyl-L-methionine is bound by residues 77–79 (TSS), Gly111, Ile131, and 138–140 (PVL).

It belongs to the class IV-like SAM-binding methyltransferase superfamily. RNA methyltransferase TrmH family. In terms of assembly, homodimer.

It is found in the cytoplasm. The catalysed reaction is cytidine(32) in tRNA + S-adenosyl-L-methionine = 2'-O-methylcytidine(32) in tRNA + S-adenosyl-L-homocysteine + H(+). Catalyzes the formation of 2'O-methylated cytidine (Cm32) at position 32 in tRNA. Is specific for cytidine. In Sulfolobus acidocaldarius (strain ATCC 33909 / DSM 639 / JCM 8929 / NBRC 15157 / NCIMB 11770), this protein is tRNA (cytidine-2'-O-)-methyltransferase TrmJ.